We begin with the raw amino-acid sequence, 381 residues long: Putrescine N-methyltransferase 3 (381 aa).

The segment at 21–81 (MNGYQNGTSK…TISHDNGNEL (61 aa)) is disordered. Polar residues-rich tracts occupy residues 23 to 39 (GYQNGTSKHQNGHQNGT) and 46 to 81 (HQNGISEHQNGHQNGTSEHQNGHQNGTISHDNGNEL). Residues 92 to 329 (PGWFSEFSAL…GVIGYMLCST (238 aa)) enclose the PABS domain. S-adenosyl-L-methionine-binding positions include Gln-123, Glu-198, and 229-230 (DG). The active-site Proton acceptor is Asp-248. Tyr-317 serves as a coordination point for S-adenosyl-L-methionine.

The protein belongs to the class I-like SAM-binding methyltransferase superfamily. Putrescine methyltransferase family. Predominantly expressed in roots.

It catalyses the reaction putrescine + S-adenosyl-L-methionine = N-methylputrescine + S-adenosyl-L-homocysteine + H(+). The protein operates within alkaloid biosynthesis; nicotine biosynthesis. Its function is as follows. Involved in the biosynthesis of pyridine alkaloid natural products, leading mainly to the production of anabasine, anatabine, nicotine and nornicotine, effective deterrents against herbivores with antiparasitic and pesticide properties (neurotoxins); nornicotine serves as the precursor in the synthesis of the carcinogen compound N'-nitrosonornicotine (NNN). Methyltransferase that mediates the conversion of putrescine to N-methylputrescine. Promotes leaves ripening. The sequence is that of Putrescine N-methyltransferase 3 from Nicotiana tabacum (Common tobacco).